A 469-amino-acid chain; its full sequence is Probable glycine dehydrogenase (decarboxylating) subunit 1 (469 aa).

Belongs to the GcvP family. N-terminal subunit subfamily. In terms of assembly, the glycine cleavage system is composed of four proteins: P, T, L and H. In this organism, the P 'protein' is a heterodimer of two subunits.

It catalyses the reaction N(6)-[(R)-lipoyl]-L-lysyl-[glycine-cleavage complex H protein] + glycine + H(+) = N(6)-[(R)-S(8)-aminomethyldihydrolipoyl]-L-lysyl-[glycine-cleavage complex H protein] + CO2. In terms of biological role, the glycine cleavage system catalyzes the degradation of glycine. The P protein binds the alpha-amino group of glycine through its pyridoxal phosphate cofactor; CO(2) is released and the remaining methylamine moiety is then transferred to the lipoamide cofactor of the H protein. This is Probable glycine dehydrogenase (decarboxylating) subunit 1 from Staphylothermus marinus (strain ATCC 43588 / DSM 3639 / JCM 9404 / F1).